The following is a 169-amino-acid chain: Nucleoside diphosphate kinase 3 (169 aa).

Residues Lys-29, Arg-105, Thr-111, Arg-122, Val-129, and Asn-132 each contribute to the ADP site. Catalysis depends on His-135, which acts as the Pros-phosphohistidine intermediate.

The protein belongs to the NDK family. Homohexamer. Interacts (via its N-terminal region) with KAT5; this interaction enables recruitment of NME3 at DNA damage sites where it plays a role in the repair of DNA. Found in association with several ciliary nephronophthisis proteins, including NEK8, CEP164, ANKS6. It depends on Mg(2+) as a cofactor.

It localises to the mitochondrion outer membrane. It is found in the cytoplasm. The protein localises to the cytoskeleton. Its subcellular location is the cilium basal body. The catalysed reaction is a 2'-deoxyribonucleoside 5'-diphosphate + ATP = a 2'-deoxyribonucleoside 5'-triphosphate + ADP. It catalyses the reaction a ribonucleoside 5'-diphosphate + ATP = a ribonucleoside 5'-triphosphate + ADP. Catalyzes the phosphorylation of ribonucleosides and deoxyribonucleoside diphosphates, other than ATP, into the corresponding triphosphates with ATP as the major phosphate donor. The ATP gamma phosphate is transferred to the nucleoside diphosphate beta phosphate via a ping-pong mechanism, using a phosphorylated active-site intermediate. Through the catalyzed exchange of gamma-phosphate between di- and triphosphonucleosides participates in regulation of intracellular nucleotide homeostasis. Inhibits granulocyte differentiation. May be required for ciliary function during renal development. In terms of biological role, independently of its kinase activity, facilitates mitochondrial tethering prior to membrane fusion through its direct membrane-binding and hexamerization. Implicated in repair of both single- and double-stranded breaks in DNA through its association with the ribonucleotide reductase complex (RNR complex) via its interaction with the histone acetyltransferase KAT5, this interaction enables recruitment of NME3 at DNA damage sites where it plays a role in the repair of DNA, independently of its kinase activity. This chain is Nucleoside diphosphate kinase 3 (Nme3), found in Mus musculus (Mouse).